A 268-amino-acid chain; its full sequence is Small ribosomal subunit protein uS2 (268 aa).

The protein belongs to the universal ribosomal protein uS2 family.

This Coprothermobacter proteolyticus (strain ATCC 35245 / DSM 5265 / OCM 4 / BT) protein is Small ribosomal subunit protein uS2.